We begin with the raw amino-acid sequence, 217 residues long: GTP cyclohydrolase-2 (217 aa).

50–54 (RIHSE) is a binding site for GTP. Residues Cys55, Cys66, and Cys68 each contribute to the Zn(2+) site. GTP-binding positions include Gln71, 93 to 95 (EGR), and Thr115. Residue Asp127 is the Proton acceptor of the active site. Residue Arg129 is the Nucleophile of the active site. Residues Thr150 and Lys155 each contribute to the GTP site.

The protein belongs to the GTP cyclohydrolase II family. Requires Zn(2+) as cofactor.

The enzyme catalyses GTP + 4 H2O = 2,5-diamino-6-hydroxy-4-(5-phosphoribosylamino)-pyrimidine + formate + 2 phosphate + 3 H(+). It participates in cofactor biosynthesis; riboflavin biosynthesis; 5-amino-6-(D-ribitylamino)uracil from GTP: step 1/4. Catalyzes the conversion of GTP to 2,5-diamino-6-ribosylamino-4(3H)-pyrimidinone 5'-phosphate (DARP), formate and pyrophosphate. The sequence is that of GTP cyclohydrolase-2 from Actinobacillus succinogenes (strain ATCC 55618 / DSM 22257 / CCUG 43843 / 130Z).